The following is a 270-amino-acid chain: UPF0354 protein BcerKBAB4_4524 (270 aa).

This sequence belongs to the UPF0354 family.

This Bacillus mycoides (strain KBAB4) (Bacillus weihenstephanensis) protein is UPF0354 protein BcerKBAB4_4524.